The sequence spans 534 residues: Probable alpha-galactosidase A (534 aa).

An N-terminal signal peptide occupies residues 1 to 25; sequence MRLITRWIPLANALASTMPVQVVAS. Cysteines 47 and 79 form a disulfide. N-linked (GlcNAc...) asparagine glycosylation is found at Asn-50, Asn-88, Asn-94, and Asn-124. Cys-127 and Cys-157 are oxidised to a cystine. The active-site Nucleophile is Asp-155. Residue Asn-204 is glycosylated (N-linked (GlcNAc...) asparagine). The active-site Proton donor is the Asp-213. Residues 413–534 form the Ricin B-type lectin domain; sequence CSQVIPTGLI…GLPAGVHVAL (122 aa). Residues Cys-430 and Cys-443 are joined by a disulfide bond. N-linked (GlcNAc...) asparagine glycosylation is present at Asn-444. Residues Cys-468 and Cys-481 are joined by a disulfide bond.

It belongs to the glycosyl hydrolase 27 family.

The protein localises to the secreted. It catalyses the reaction Hydrolysis of terminal, non-reducing alpha-D-galactose residues in alpha-D-galactosides, including galactose oligosaccharides, galactomannans and galactolipids.. Its function is as follows. Hydrolyzes a variety of simple alpha-D-galactoside as well as more complex molecules such as oligosaccharides and polysaccharides. The chain is Probable alpha-galactosidase A (aglA) from Aspergillus oryzae (strain ATCC 42149 / RIB 40) (Yellow koji mold).